A 685-amino-acid polypeptide reads, in one-letter code: DNA ligase (685 aa).

Residues 47–51 (DSEYD), 96–97 (SL), and Glu-125 each bind NAD(+). Lys-127 (N6-AMP-lysine intermediate) is an active-site residue. 4 residues coordinate NAD(+): Arg-148, Glu-185, Lys-304, and Lys-328. Cys-422, Cys-425, Cys-440, and Cys-446 together coordinate Zn(2+). A BRCT domain is found at 605 to 685 (ADAQPLKGQT…ALLALFAANR (81 aa)).

This sequence belongs to the NAD-dependent DNA ligase family. LigA subfamily. The cofactor is Mg(2+). Mn(2+) serves as cofactor.

The enzyme catalyses NAD(+) + (deoxyribonucleotide)n-3'-hydroxyl + 5'-phospho-(deoxyribonucleotide)m = (deoxyribonucleotide)n+m + AMP + beta-nicotinamide D-nucleotide.. In terms of biological role, DNA ligase that catalyzes the formation of phosphodiester linkages between 5'-phosphoryl and 3'-hydroxyl groups in double-stranded DNA using NAD as a coenzyme and as the energy source for the reaction. It is essential for DNA replication and repair of damaged DNA. This is DNA ligase from Shewanella sp. (strain W3-18-1).